A 234-amino-acid chain; its full sequence is Large ribosomal subunit protein uL1 (234 aa).

It belongs to the universal ribosomal protein uL1 family. As to quaternary structure, part of the 50S ribosomal subunit.

Functionally, binds directly to 23S rRNA. The L1 stalk is quite mobile in the ribosome, and is involved in E site tRNA release. Protein L1 is also a translational repressor protein, it controls the translation of the L11 operon by binding to its mRNA. This chain is Large ribosomal subunit protein uL1, found in Helicobacter pylori (strain G27).